Reading from the N-terminus, the 511-residue chain is NADH-quinone oxidoreductase subunit N 1 (511 aa).

14 helical membrane passes run Leu15–Val35, Ala46–Val66, Phe89–Ile109, Gly120–Met140, Leu142–Phe162, Leu177–Leu197, Pro221–Val241, Val264–Pro284, Tyr289–Leu309, Leu317–Asp337, Gly347–Thr367, Ala393–Trp413, Gly426–Leu446, and Ala471–Leu491.

This sequence belongs to the complex I subunit 2 family. NDH-1 is composed of 14 different subunits. Subunits NuoA, H, J, K, L, M, N constitute the membrane sector of the complex.

The protein resides in the cell inner membrane. It catalyses the reaction a quinone + NADH + 5 H(+)(in) = a quinol + NAD(+) + 4 H(+)(out). NDH-1 shuttles electrons from NADH, via FMN and iron-sulfur (Fe-S) centers, to quinones in the respiratory chain. The immediate electron acceptor for the enzyme in this species is believed to be ubiquinone. Couples the redox reaction to proton translocation (for every two electrons transferred, four hydrogen ions are translocated across the cytoplasmic membrane), and thus conserves the redox energy in a proton gradient. This is NADH-quinone oxidoreductase subunit N 1 from Koribacter versatilis (strain Ellin345).